A 587-amino-acid polypeptide reads, in one-letter code: Calcium/calmodulin-dependent protein kinase kinase 2 (587 aa).

Polar residues predominate over residues Met-1–Ser-11. Disordered regions lie at residues Met-1–Pro-32 and Glu-74–Asp-115. The residue at position 2 (Ser-2) is an N-acetylserine. 5 positions are modified to phosphoserine: Ser-99, Ser-113, Ser-128, Ser-132, and Ser-136. Over residues Gln-101–Asp-115 the composition is skewed to polar residues. A Protein kinase domain is found at Tyr-164–Val-445. Residues Ile-170–Val-178 and Lys-193 each bind ATP. An RP domain region spans residues Gln-203 to Pro-225. The disordered stretch occupies residues Ala-204 to Gln-224. Asp-311 (proton acceptor) is an active-site residue. The autoinhibitory domain stretch occupies residues Glu-471 to His-476. The interval Val-474–Phe-499 is calmodulin-binding. Residues Ser-494 and Ser-510 each carry the phosphoserine modification. The segment at Gly-496–Glu-587 is disordered. Positions Pro-520–Gln-535 are enriched in basic and acidic residues. The span at Pro-569–Gln-579 shows a compositional bias: pro residues. Ser-571 is subject to Phosphoserine.

This sequence belongs to the protein kinase superfamily. Ser/Thr protein kinase family. Interacts with calmodulin. In terms of processing, phosphorylated by PKA. Each isoform may show a different pattern of phosphorylation. Autophosphorylated. Mainly expressed in brain, but detected in all tissues tested (at protein level). In the brain, isoform 1 may be predominant. with high levels in the cerebellum and hippocampus, although isoform 3 is detectable. Isoform 3 is also expressed in lung.

The protein localises to the nucleus. The protein resides in the cytoplasm. It localises to the cell projection. It is found in the neuron projection. The catalysed reaction is L-seryl-[protein] + ATP = O-phospho-L-seryl-[protein] + ADP + H(+). The enzyme catalyses L-threonyl-[protein] + ATP = O-phospho-L-threonyl-[protein] + ADP + H(+). Activated by Ca(2+)/calmodulin. Binding of calmodulin may relieve intrasteric autoinhibition. Autophosphorylation does not alter activity or regulation by Ca(2+)/calmodulin. In part, activity is independent on Ca(2+)/calmodulin. Calcium/calmodulin-dependent protein kinase belonging to a proposed calcium-triggered signaling cascade involved in a number of cellular processes. Phosphorylates CAMK1 and CAMK4. Phosphorylates CAMK1D. Seems to be involved in hippocampal activation of CREB1. Efficiently phosphorylates 5'-AMP-activated protein kinase (AMPK) trimer, including that consisting of PRKAA1, PRKAB1 and PRKAG1. This phosphorylation is stimulated in response to Ca(2+) signals. May play a role in neurite growth. Isoform 2 may promote neurite elongation, while isoform 1 may promoter neurite branching. In Rattus norvegicus (Rat), this protein is Calcium/calmodulin-dependent protein kinase kinase 2 (Camkk2).